The following is a 226-amino-acid chain: Deoxyribose-phosphate aldolase (226 aa).

The active-site Proton donor/acceptor is aspartate 95. Lysine 157 acts as the Schiff-base intermediate with acetaldehyde in catalysis. Residue lysine 186 is the Proton donor/acceptor of the active site.

Belongs to the DeoC/FbaB aldolase family. DeoC type 1 subfamily.

The protein localises to the cytoplasm. The catalysed reaction is 2-deoxy-D-ribose 5-phosphate = D-glyceraldehyde 3-phosphate + acetaldehyde. Its pathway is carbohydrate degradation; 2-deoxy-D-ribose 1-phosphate degradation; D-glyceraldehyde 3-phosphate and acetaldehyde from 2-deoxy-alpha-D-ribose 1-phosphate: step 2/2. Partially inhibited by acetaldehyde. After incubation for 2, 4 and 6 hours in 300 mM acetaldehyde at 25 degrees Celsius, retains approximately 61.32%, 42.33% and 34.73% of the initial 2-deoxy-D-ribose-5-phosphate (DR5P) cleavage activity, respectively. Catalyzes a reversible aldol reaction between acetaldehyde and D-glyceraldehyde 3-phosphate to generate 2-deoxy-D-ribose 5-phosphate. Its function is as follows. In vitro, DERA can catalyze the aldol condensation of chloroacetaldehyde (CHAD) and acetaldehyde (ACD), yielding (S)-4-chloro-3-hydroxybutanal ((S)-CHB), which can combine with another aldehyde to form (3R,5S)-6-chloro-2,4,6-trideoxyhexapyranose (CTeHP), a key intermediate for statin drugs. This Pseudomonas syringae pv. syringae (strain B728a) protein is Deoxyribose-phosphate aldolase.